We begin with the raw amino-acid sequence, 101 residues long: Small ribosomal subunit protein uS14 (101 aa).

Belongs to the universal ribosomal protein uS14 family. Part of the 30S ribosomal subunit. Contacts proteins S3 and S10.

In terms of biological role, binds 16S rRNA, required for the assembly of 30S particles and may also be responsible for determining the conformation of the 16S rRNA at the A site. The polypeptide is Small ribosomal subunit protein uS14 (Cupriavidus metallidurans (strain ATCC 43123 / DSM 2839 / NBRC 102507 / CH34) (Ralstonia metallidurans)).